A 113-amino-acid polypeptide reads, in one-letter code: Putative hemolysin E-like protein (113 aa).

The protein belongs to the hemolysin E family.

The chain is Putative hemolysin E-like protein from Shigella flexneri.